Here is a 274-residue protein sequence, read N- to C-terminus: Large ribosomal subunit protein uL2 (274 aa).

Disordered stretches follow at residues 34–54 (LEKKSKSGGRNNNGRITTRHI) and 224–261 (VAMNPVDHPHGGGEGRTSGGRHPVSPWGFPTKGAKTRA).

It belongs to the universal ribosomal protein uL2 family. As to quaternary structure, part of the 50S ribosomal subunit. Forms a bridge to the 30S subunit in the 70S ribosome.

Functionally, one of the primary rRNA binding proteins. Required for association of the 30S and 50S subunits to form the 70S ribosome, for tRNA binding and peptide bond formation. It has been suggested to have peptidyltransferase activity; this is somewhat controversial. Makes several contacts with the 16S rRNA in the 70S ribosome. The protein is Large ribosomal subunit protein uL2 of Ectopseudomonas mendocina (strain ymp) (Pseudomonas mendocina).